We begin with the raw amino-acid sequence, 546 residues long: MAELTISSDEIRSAIANYTSSYSAEASREEVGVVISAADGIAQVSGLPSVMANELLEFPGGVIGVAQNLDTNSIGVVVLGNFESLKEGDEVKRTGEVLSIPVGEEFLGRVINPLGQPIDGMGPITAEEDRVLELQAPSVLQRQPVEEPMQTGIKAIDAMTPIGRGQRQLIIGDRKTGKTAVCIDTILNQKANWESGDKNKQVRCIYVAIGQKGSTIAGVRHTLEQHGALEYTTIVAAPASDAAGFKWLAPFSGAALGQHWMYQGNHVLIIYDDLTKQAEAYRAISLLLRRPPGREAYPGDVFYLHSRLLERAAKLSDDMGAGSMTALPIIETKANDVSAFIPTNVISITDGQVFLESDLFNQGVRPAINVGVSVSRVGGAAQTKGMKKVAGNLRLELAAYRDLQAFAAFASDLDPASKAQLERGERLVELLKQSESSPQPVEYQMVSIFLADQGIFDVVPVEDVRRFEKELHDHLNSATPQVFEQIQGGTALTDESKDALVAAAKDFTPSFRTTEGNNLGTEAPVDPLAADDVNKTELNVSRKTAK.

Residue 172-179 (GDRKTGKT) participates in ATP binding. 2 stretches are compositionally biased toward polar residues: residues 511 to 520 (FRTTEGNNLG) and 536 to 546 (TELNVSRKTAK). A disordered region spans residues 511–546 (FRTTEGNNLGTEAPVDPLAADDVNKTELNVSRKTAK).

It belongs to the ATPase alpha/beta chains family. F-type ATPases have 2 components, CF(1) - the catalytic core - and CF(0) - the membrane proton channel. CF(1) has five subunits: alpha(3), beta(3), gamma(1), delta(1), epsilon(1). CF(0) has three main subunits: a(1), b(2) and c(9-12). The alpha and beta chains form an alternating ring which encloses part of the gamma chain. CF(1) is attached to CF(0) by a central stalk formed by the gamma and epsilon chains, while a peripheral stalk is formed by the delta and b chains.

It localises to the cell membrane. It carries out the reaction ATP + H2O + 4 H(+)(in) = ADP + phosphate + 5 H(+)(out). In terms of biological role, produces ATP from ADP in the presence of a proton gradient across the membrane. The alpha chain is a regulatory subunit. The sequence is that of ATP synthase subunit alpha from Corynebacterium aurimucosum (strain ATCC 700975 / DSM 44827 / CIP 107346 / CN-1) (Corynebacterium nigricans).